Consider the following 487-residue polypeptide: Beta-barrel assembly-enhancing protease (487 aa).

The signal sequence occupies residues 1-27 (MFRQLKKNLVATLIAAMTIGQVAPAFA). A Zn(2+)-binding site is contributed by H136. The active site involves E137. 2 residues coordinate Zn(2+): H140 and E201. The Proton donor role is filled by D205. TPR repeat units lie at residues 309-342 (RAAQYGRALQAMEANKYDEARKTLQPLLAAEPGN), 344-376 (WYLDLATDIDLGQNKANEAINRLKNARDLRTNP), 377-409 (VLQLNLANAYLQGGQPQEAANILNRYTFNNKDD), and 427-460 (DQELAARAEGYALAGRLDQAISLLSSASSQVKLG).

The protein belongs to the peptidase M48 family. BepA subfamily. As to quaternary structure, interacts with BamA and LoiP. It depends on Zn(2+) as a cofactor.

It is found in the periplasm. Its activity is regulated as follows. Protease activity is inhibited by the metal chelating reagents 1,10-phenanthroline and EDTA. In terms of biological role, functions both as a chaperone and a metalloprotease. Maintains the integrity of the outer membrane by promoting either the assembly or the elimination of outer membrane proteins, depending on their folding state. Promotes disulfide rearrangement of LptD during its biogenesis, and proteolytic degradation of LptD and BamA when their proper assembly is compromised. May facilitate membrane attachment of LoiP under unfavorable conditions. The sequence is that of Beta-barrel assembly-enhancing protease from Escherichia coli (strain K12).